The sequence spans 458 residues: Retinoic acid receptor alpha (458 aa).

The modulating stretch occupies residues 1–86; sequence MASNGGSCPS…PPPLPRIYKP (86 aa). Over residues 54 to 68 the composition is skewed to polar residues; that stretch reads TPSPATIETQSTSSE. The segment at 54 to 76 is disordered; sequence TPSPATIETQSTSSEEIVPSPPS. 2 NR C4-type zinc fingers span residues 87 to 107 and 123 to 147; these read CFVCQDKSSGYHYGVSACEGC and CHRDKTCIINKVTRNRCQYCRLQKC. The segment at residues 87 to 152 is a DNA-binding region (nuclear receptor); the sequence is CFVCQDKSSG…RLQKCFEVGM (66 aa). The interval 153–182 is hinge; it reads SKESVRNDRNKKKKQEAPKQECTESYIITP. The region spanning 183-417 is the NR LBD domain; it reads EVEDLVEKVR…PLIQEMLENS (235 aa). The short motif at 408 to 416 is the 9aaTAD element; the sequence is PLIQEMLEN. The interval 417-458 is disordered; the sequence is SEGLDSLTGQPPRASSLAPPPGSCSPSLSPSSNRSSPTSHSP. Over residues 440 to 458 the composition is skewed to low complexity; that stretch reads CSPSLSPSSNRSSPTSHSP.

It belongs to the nuclear hormone receptor family. NR1 subfamily. As to quaternary structure, heterodimer; with an rxr molecule. Binds DNA preferentially as a rar/rxr heterodimer. As to expression, expressed in forelimb, in the distal forelimb blastema, kidney, liver and hindlimb blastemal mesenchymal cells.

Its subcellular location is the nucleus. Its function is as follows. Receptor for retinoic acid. Retinoic acid receptors bind as heterodimers to their target response elements in response to their ligands, all-trans or 9-cis retinoic acid, and regulate gene expression in various biological processes. The rar/rxr heterodimers bind to the retinoic acid response elements (RARE) composed of tandem 5'-AGGTCA-3' sites known as DR1-DR5. Retinoic acid signaling appears to be involved in specifying proximal-distal axis in limb regeneration. This is Retinoic acid receptor alpha (RARA) from Notophthalmus viridescens (Eastern newt).